The chain runs to 366 residues: Chorismate synthase (366 aa).

NADP(+)-binding residues include Arg48 and Arg54. Residues 129-131 (RSS), 241-242 (NA), Gly290, 305-309 (KPTSS), and Arg331 each bind FMN.

It belongs to the chorismate synthase family. As to quaternary structure, homotetramer. It depends on FMNH2 as a cofactor.

It catalyses the reaction 5-O-(1-carboxyvinyl)-3-phosphoshikimate = chorismate + phosphate. The protein operates within metabolic intermediate biosynthesis; chorismate biosynthesis; chorismate from D-erythrose 4-phosphate and phosphoenolpyruvate: step 7/7. Functionally, catalyzes the anti-1,4-elimination of the C-3 phosphate and the C-6 proR hydrogen from 5-enolpyruvylshikimate-3-phosphate (EPSP) to yield chorismate, which is the branch point compound that serves as the starting substrate for the three terminal pathways of aromatic amino acid biosynthesis. This reaction introduces a second double bond into the aromatic ring system. The sequence is that of Chorismate synthase from Nitrobacter hamburgensis (strain DSM 10229 / NCIMB 13809 / X14).